Reading from the N-terminus, the 344-residue chain is Type VI secretion system component TssA1 (344 aa).

Homododecamer. Interacts with TssB1 and TssC1. Interacts with TssK1 and TssF1.

Core component of the H1 type VI (H1-T6SS) secretion system that plays a role in the release of toxins targeting both eukaryotic and prokaryotic species. Forms a dodecameric ring-shaped structure located at one end of the T6SS sheath. May properly attach the pre-assembled sheath onto the baseplate and/or stabilize the sheaths tubular structure. The protein is Type VI secretion system component TssA1 of Pseudomonas aeruginosa (strain ATCC 15692 / DSM 22644 / CIP 104116 / JCM 14847 / LMG 12228 / 1C / PRS 101 / PAO1).